We begin with the raw amino-acid sequence, 567 residues long: Proline--tRNA ligase (567 aa).

The protein belongs to the class-II aminoacyl-tRNA synthetase family. ProS type 1 subfamily. In terms of assembly, homodimer.

It is found in the cytoplasm. The enzyme catalyses tRNA(Pro) + L-proline + ATP = L-prolyl-tRNA(Pro) + AMP + diphosphate. Functionally, catalyzes the attachment of proline to tRNA(Pro) in a two-step reaction: proline is first activated by ATP to form Pro-AMP and then transferred to the acceptor end of tRNA(Pro). As ProRS can inadvertently accommodate and process non-cognate amino acids such as alanine and cysteine, to avoid such errors it has two additional distinct editing activities against alanine. One activity is designated as 'pretransfer' editing and involves the tRNA(Pro)-independent hydrolysis of activated Ala-AMP. The other activity is designated 'posttransfer' editing and involves deacylation of mischarged Ala-tRNA(Pro). The misacylated Cys-tRNA(Pro) is not edited by ProRS. This chain is Proline--tRNA ligase, found in Streptomyces griseus subsp. griseus (strain JCM 4626 / CBS 651.72 / NBRC 13350 / KCC S-0626 / ISP 5235).